The following is a 400-amino-acid chain: TBC1 domain family member 13 (400 aa).

A Rab-GAP TBC domain is found at 35 to 345 (PCEGGLRCLC…RIWDSLFADG (311 aa)).

In terms of assembly, interacts with RAB1A and RAB10; in a GTP-dependent manner. As to expression, expressed in adipocytes.

It localises to the membrane. The protein resides in the cytoplasm. Its function is as follows. Acts as a GTPase-activating protein for RAB35. Together with RAB35 may be involved in regulation of insulin-induced glucose transporter SLC2A4/GLUT4 translocation to the plasma membrane in adipocytes. In Mus musculus (Mouse), this protein is TBC1 domain family member 13 (Tbc1d13).